The sequence spans 386 residues: L-lactate dehydrogenase (386 aa).

The 380-residue stretch at 1–380 (MIISAASDYR…SGDALSRVTR (380 aa)) folds into the FMN hydroxy acid dehydrogenase domain. Tyrosine 24 serves as a coordination point for substrate. Serine 106 and glutamine 127 together coordinate FMN. Residue tyrosine 129 participates in substrate binding. Position 155 (threonine 155) interacts with FMN. Residue arginine 164 participates in substrate binding. FMN is bound at residue lysine 251. Histidine 275 (proton acceptor) is an active-site residue. Residue arginine 278 coordinates substrate. 306–330 (DSGIRSGLDVVRMLALGADAVLLGR) contributes to the FMN binding site.

The protein belongs to the FMN-dependent alpha-hydroxy acid dehydrogenase family. It depends on FMN as a cofactor.

It localises to the cell inner membrane. The catalysed reaction is (S)-lactate + A = pyruvate + AH2. Catalyzes the conversion of L-lactate to pyruvate. Is coupled to the respiratory chain. In Xanthomonas campestris pv. campestris (strain 8004), this protein is L-lactate dehydrogenase.